Reading from the N-terminus, the 189-residue chain is dCTP deaminase (189 aa).

Residues 112 to 117 (KSTYAR), 136 to 138 (TLE), Gln-157, Tyr-171, and Gln-181 each bind dCTP. Glu-138 functions as the Proton donor/acceptor in the catalytic mechanism.

Belongs to the dCTP deaminase family. In terms of assembly, homotrimer.

The catalysed reaction is dCTP + H2O + H(+) = dUTP + NH4(+). It participates in pyrimidine metabolism; dUMP biosynthesis; dUMP from dCTP (dUTP route): step 1/2. Functionally, catalyzes the deamination of dCTP to dUTP. The chain is dCTP deaminase from Burkholderia mallei (strain NCTC 10247).